Reading from the N-terminus, the 428-residue chain is Serine--tRNA ligase (428 aa).

Thr-231–Glu-233 contributes to the L-serine binding site. Residues Arg-262–Glu-264 and Val-278 contribute to the ATP site. Glu-285 serves as a coordination point for L-serine. Glu-349 to Ser-352 provides a ligand contact to ATP. Residue Thr-384 coordinates L-serine.

The protein belongs to the class-II aminoacyl-tRNA synthetase family. Type-1 seryl-tRNA synthetase subfamily. In terms of assembly, homodimer. The tRNA molecule binds across the dimer.

It localises to the cytoplasm. It catalyses the reaction tRNA(Ser) + L-serine + ATP = L-seryl-tRNA(Ser) + AMP + diphosphate + H(+). The catalysed reaction is tRNA(Sec) + L-serine + ATP = L-seryl-tRNA(Sec) + AMP + diphosphate + H(+). The protein operates within aminoacyl-tRNA biosynthesis; selenocysteinyl-tRNA(Sec) biosynthesis; L-seryl-tRNA(Sec) from L-serine and tRNA(Sec): step 1/1. In terms of biological role, catalyzes the attachment of serine to tRNA(Ser). Is also able to aminoacylate tRNA(Sec) with serine, to form the misacylated tRNA L-seryl-tRNA(Sec), which will be further converted into selenocysteinyl-tRNA(Sec). This is Serine--tRNA ligase from Bifidobacterium longum (strain DJO10A).